A 320-amino-acid polypeptide reads, in one-letter code: MAAAAAAAAATEQQGSNGPVKKSMREKAVERRNVNKEHNSNFKAGYIPIDEDRLHKTGLRGRKGNLAICVIVLLFILAVINLLITLVIWAVIRIGPNGCDSMEFHESGLLRFKQVSDMGVIHPLYKSTVGGRRNENLVITGNNQPIVFQQGTTKLSVEKNKTSITSDIGMQFFDPRTHNILFSTDYETHEFHLPSGVKSLNVQKASTERITSNATSDLNIKVDGRAIVRGNEGVFIMGKTIEFHMGGDVELKAENSIILNGTVMVSPTRLPSSSSGDQSGSGDWVRYKLCMCADGTLFKVQVTGHNMGCQVSDNPCGNTH.

Over residues 1–10 the composition is skewed to low complexity; sequence MAAAAAAAAA. The tract at residues 1 to 34 is disordered; it reads MAAAAAAAAATEQQGSNGPVKKSMREKAVERRNV. Residues 1-67 lie on the Cytoplasmic side of the membrane; it reads MAAAAAAAAA…GLRGRKGNLA (67 aa). Residues 23-34 are compositionally biased toward basic and acidic residues; the sequence is SMREKAVERRNV. Residues 68–88 traverse the membrane as a helical; Signal-anchor for type II membrane protein segment; the sequence is ICVIVLLFILAVINLLITLVI. Residues 89 to 320 are Extracellular-facing; sequence WAVIRIGPNG…VSDNPCGNTH (232 aa). N-linked (GlcNAc...) asparagine glycosylation is found at Asn-160, Asn-213, and Asn-260. 2 disulfides stabilise this stretch: Cys-290–Cys-316 and Cys-292–Cys-309.

It belongs to the sarcoglycan beta/delta/gamma/zeta family. As to quaternary structure, cross-link to form 2 major subcomplexes: one consisting of SGCB, SGCD and SGCG and the other consisting of SGCB and SGCD. The association between SGCB and SGCG is particularly strong while SGCA is loosely associated with the other sarcoglycans. Disulfide bonds are present. As to expression, most strongly expressed in skeletal and heart muscle. Also detected in proliferating myoblasts.

Its subcellular location is the cell membrane. The protein localises to the sarcolemma. It is found in the cytoplasm. It localises to the cytoskeleton. Functionally, component of the sarcoglycan complex, a subcomplex of the dystrophin-glycoprotein complex which forms a link between the F-actin cytoskeleton and the extracellular matrix. In Mus musculus (Mouse), this protein is Beta-sarcoglycan (Sgcb).